A 469-amino-acid polypeptide reads, in one-letter code: Properdin (469 aa).

The signal sequence occupies residues 1-27 (MITEGAQAPRLLLPPLLLLLTLPATGS). TSP type-1 domains are found at residues 28–76 (DPVL…QPCR), 77–134 (SPRW…QCCP), 136–191 (MGGW…QVCP), 193–255 (HGAW…PPCP), 257–313 (AGGW…VPCP), 315–377 (DGEW…QHCP), and 379–462 (KGSW…PACK). 3 cysteine pairs are disulfide-bonded: cysteine 32–cysteine 56, cysteine 43–cysteine 72, and cysteine 57–cysteine 75. C-linked (Man) tryptophan glycans are attached at residues tryptophan 83 and tryptophan 86. 7 disulfide bridges follow: cysteine 89–cysteine 127, cysteine 93–cysteine 133, cysteine 104–cysteine 111, cysteine 132–cysteine 170, cysteine 148–cysteine 184, cysteine 152–cysteine 190, and cysteine 163–cysteine 174. O-linked (Fuc...) threonine glycosylation is present at threonine 92. Residues tryptophan 139, tryptophan 142, and tryptophan 145 are each glycosylated (C-linked (Man) tryptophan). The O-linked (Fuc...) threonine glycan is linked to threonine 151. C-linked (Man) tryptophan glycosylation is found at tryptophan 196, tryptophan 199, and tryptophan 202. 3 disulfides stabilise this stretch: cysteine 205–cysteine 248, cysteine 209–cysteine 254, and cysteine 224–cysteine 238. Residue serine 208 is glycosylated (O-linked (Fuc...) serine). Positions 219-238 (TRSRKCSAPEPSQKPPGKPC) are disordered. Residues tryptophan 260 and tryptophan 263 are each glycosylated (C-linked (Man) tryptophan). 3 disulfide bridges follow: cysteine 269–cysteine 306, cysteine 273–cysteine 312, and cysteine 284–cysteine 296. Threonine 272 carries an O-linked (Fuc...) threonine glycan. Tryptophan 321 and tryptophan 324 each carry a C-linked (Man) tryptophan glycan. 3 cysteine pairs are disulfide-bonded: cysteine 327–cysteine 370, cysteine 337–cysteine 376, and cysteine 350–cysteine 360. Residues 351-359 (RGRKFDGHR) form an interaction with Complement C3 beta chain region. Tryptophan 382, tryptophan 385, and tryptophan 388 each carry a C-linked (Man) tryptophan glycan. Intrachain disulfides connect cysteine 391–cysteine 455, cysteine 395–cysteine 461, and cysteine 407–cysteine 439. A glycan (N-linked (GlcNAc...) (complex) asparagine) is linked at asparagine 428.

In terms of assembly, in plasma, properdin exists as dimers, trimers or tetramers in the relative proportions of 26:54:20. Interacts with the pro-C3-convertase enzyme complex (C3b-Bb) comprised of Complement C3 beta chain (C3b) and the Complement factor B Bb fragment (Bb), where it binds (via its TSP type-1 5 domain) with C3b and Bb. This interaction stabilizes the complex and allows it to become the active C3-convertase enzyme complex (C3b-Bb-FP). Interacts with C3b. Interacts with CFB.

It is found in the secreted. In terms of biological role, a positive regulator of the alternate pathway (AP) of complement. It binds to and stabilizes the C3- and C5-convertase enzyme complexes. Inhibits CFI-CFH mediated degradation of Complement C3 beta chain (C3b). The sequence is that of Properdin from Homo sapiens (Human).